Consider the following 244-residue polypeptide: Ribonuclease 3 2 (244 aa).

The RNase III domain occupies leucine 11–glycine 136. Glutamate 50 is a Mg(2+) binding site. Aspartate 54 is a catalytic residue. Positions 122 and 125 each coordinate Mg(2+). The active site involves glutamate 125. In terms of domain architecture, DRBM spans asparagine 164–alanine 234.

The protein belongs to the ribonuclease III family. Homodimer. Mg(2+) serves as cofactor.

It is found in the cytoplasm. It carries out the reaction Endonucleolytic cleavage to 5'-phosphomonoester.. In terms of biological role, digests double-stranded RNA. Involved in the processing of primary rRNA transcript to yield the immediate precursors to the large and small rRNAs (23S and 16S). Processes some mRNAs, and tRNAs when they are encoded in the rRNA operon. Processes pre-crRNA and tracrRNA of type II CRISPR loci if present in the organism. This is Ribonuclease 3 2 from Synechocystis sp. (strain ATCC 27184 / PCC 6803 / Kazusa).